Here is a 288-residue protein sequence, read N- to C-terminus: Bifunctional protein FolD (288 aa).

NADP(+) contacts are provided by residues G166–S168, S191, and V232.

Belongs to the tetrahydrofolate dehydrogenase/cyclohydrolase family. As to quaternary structure, homodimer.

The catalysed reaction is (6R)-5,10-methylene-5,6,7,8-tetrahydrofolate + NADP(+) = (6R)-5,10-methenyltetrahydrofolate + NADPH. The enzyme catalyses (6R)-5,10-methenyltetrahydrofolate + H2O = (6R)-10-formyltetrahydrofolate + H(+). It participates in one-carbon metabolism; tetrahydrofolate interconversion. Catalyzes the oxidation of 5,10-methylenetetrahydrofolate to 5,10-methenyltetrahydrofolate and then the hydrolysis of 5,10-methenyltetrahydrofolate to 10-formyltetrahydrofolate. The protein is Bifunctional protein FolD of Roseiflexus sp. (strain RS-1).